Here is a 389-residue protein sequence, read N- to C-terminus: MTMQHVFPTYQRFPFAITDGQGVHLTDNHGKTYLDFTAGIGVCNFGYHQPQIQAAVTQQLTHIWHTSNLYENELQDAVAGLLANGEERLVYFANSGTEANEAALKLARKYTGKTGILAFQHSFHGRTYGAMSMTGNPHIQAGYAPLVPGITFATYNDDAALDKITPELAAVILEVVQGEGGVFAGQTAWLQAVNAKCQATGVLLIIDEVQTGIGRTGYRMAYEGYGLDPDIYTVAKGLANGLPVGAMVGRRQLATAFGPGSHGSTFAGNAVAMAAAKCVLPQLTPALLTTVRAHAKLVWQSLATQVEPIPVVKQITGKGLMIGIHLDEQIPVNQVITRLQVEGLLTLSAGDNTLRLLPPIVMQPADLLAGIALIAKVLTTLTTEVTTNE.

Pyridoxal 5'-phosphate contacts are provided by residues 96–97 (GT) and Phe123. Position 126 (Arg126) interacts with N(2)-acetyl-L-ornithine. Residue 207–210 (DEVQ) participates in pyridoxal 5'-phosphate binding. Lys236 carries the post-translational modification N6-(pyridoxal phosphate)lysine. Ser264 is a binding site for N(2)-acetyl-L-ornithine. Thr265 provides a ligand contact to pyridoxal 5'-phosphate.

This sequence belongs to the class-III pyridoxal-phosphate-dependent aminotransferase family. ArgD subfamily. Homodimer. Pyridoxal 5'-phosphate is required as a cofactor.

Its subcellular location is the cytoplasm. It catalyses the reaction N(2)-acetyl-L-ornithine + 2-oxoglutarate = N-acetyl-L-glutamate 5-semialdehyde + L-glutamate. The protein operates within amino-acid biosynthesis; L-arginine biosynthesis; N(2)-acetyl-L-ornithine from L-glutamate: step 4/4. The sequence is that of Acetylornithine aminotransferase from Lactiplantibacillus plantarum (strain ATCC BAA-793 / NCIMB 8826 / WCFS1) (Lactobacillus plantarum).